We begin with the raw amino-acid sequence, 494 residues long: Transmembrane and coiled-coil domain-containing protein 6 (494 aa).

A coiled-coil region spans residues 15 to 39; sequence GVEELRRRRREREAALRKARREQQL. The next 2 helical transmembrane spans lie at 338 to 358 and 386 to 406; these read LVAA…ALLP and PLLQ…TVLC.

The protein localises to the membrane. This chain is Transmembrane and coiled-coil domain-containing protein 6 (Tmco6), found in Mus musculus (Mouse).